A 1007-amino-acid polypeptide reads, in one-letter code: Kinesin-like protein KIN-14F (1007 aa).

The region spanning 41–187 (AARRNEAAGW…CVLALKSYGD (147 aa)) is the Calponin-homology (CH) domain. In terms of domain architecture, Kinesin motor spans 390–715 (SIRVYCRVRP…LKFAERVSTV (326 aa)). 472–479 (GQTGSGKT) is a binding site for ATP. Residues 718-748 (GAARLNKESGEVKELKEQIARLKSSLAMKDS) are a coiled coil. A compositionally biased stretch (basic and acidic residues) spans 885–904 (KQYLRNNSRKKDGNEFEQQR). Disordered stretches follow at residues 885–924 (KQYL…ATSD) and 944–1007 (SENG…AGTK). Polar residues predominate over residues 963 to 1001 (TRTPLHSQIPSASRKTSNGNRSGRQPLSGSDSRRLSSNG).

The protein belongs to the TRAFAC class myosin-kinesin ATPase superfamily. Kinesin family. KIN-14 subfamily.

The chain is Kinesin-like protein KIN-14F from Oryza sativa subsp. japonica (Rice).